Here is a 253-residue protein sequence, read N- to C-terminus: Triosephosphate isomerase (253 aa).

Position 8-10 (8-10 (NWK)) interacts with substrate. Catalysis depends on His93, which acts as the Electrophile. Glu165 serves as the catalytic Proton acceptor. Substrate contacts are provided by residues Gly171, Ser210, and 231–232 (GG).

The protein belongs to the triosephosphate isomerase family. In terms of assembly, homodimer.

It is found in the cytoplasm. The enzyme catalyses D-glyceraldehyde 3-phosphate = dihydroxyacetone phosphate. Its pathway is carbohydrate biosynthesis; gluconeogenesis. It functions in the pathway carbohydrate degradation; glycolysis; D-glyceraldehyde 3-phosphate from glycerone phosphate: step 1/1. Its function is as follows. Involved in the gluconeogenesis. Catalyzes stereospecifically the conversion of dihydroxyacetone phosphate (DHAP) to D-glyceraldehyde-3-phosphate (G3P). This is Triosephosphate isomerase from Francisella philomiragia subsp. philomiragia (strain ATCC 25017 / CCUG 19701 / FSC 153 / O#319-036).